The primary structure comprises 93 residues: ATP synthase subunit c (93 aa).

The next 2 helical transmembrane spans lie at 13–33 (AIGVGIAIGVAACGGGIGMGI) and 58–78 (ISLAMIEAQVIYALVIVFILL).

Belongs to the ATPase C chain family. F-type ATPases have 2 components, F(1) - the catalytic core - and F(0) - the membrane proton channel. F(1) has five subunits: alpha(3), beta(3), gamma(1), delta(1), epsilon(1). F(0) has three main subunits: a(1), b(2) and c(10-14). The alpha and beta chains form an alternating ring which encloses part of the gamma chain. F(1) is attached to F(0) by a central stalk formed by the gamma and epsilon chains, while a peripheral stalk is formed by the delta and b chains.

The protein resides in the cell inner membrane. F(1)F(0) ATP synthase produces ATP from ADP in the presence of a proton or sodium gradient. F-type ATPases consist of two structural domains, F(1) containing the extramembraneous catalytic core and F(0) containing the membrane proton channel, linked together by a central stalk and a peripheral stalk. During catalysis, ATP synthesis in the catalytic domain of F(1) is coupled via a rotary mechanism of the central stalk subunits to proton translocation. In terms of biological role, key component of the F(0) channel; it plays a direct role in translocation across the membrane. A homomeric c-ring of between 10-14 subunits forms the central stalk rotor element with the F(1) delta and epsilon subunits. This chain is ATP synthase subunit c, found in Campylobacter hominis (strain ATCC BAA-381 / DSM 21671 / CCUG 45161 / LMG 19568 / NCTC 13146 / CH001A).